The primary structure comprises 715 residues: Elongation factor G (715 aa).

Residues 8 to 290 (NRYRNIGICA…AVIDFLPAPT (283 aa)) enclose the tr-type G domain. GTP-binding positions include 17–24 (AHVDAGKT), 88–92 (DTPGH), and 142–145 (NKMD).

Belongs to the TRAFAC class translation factor GTPase superfamily. Classic translation factor GTPase family. EF-G/EF-2 subfamily.

The protein resides in the cytoplasm. In terms of biological role, catalyzes the GTP-dependent ribosomal translocation step during translation elongation. During this step, the ribosome changes from the pre-translocational (PRE) to the post-translocational (POST) state as the newly formed A-site-bound peptidyl-tRNA and P-site-bound deacylated tRNA move to the P and E sites, respectively. Catalyzes the coordinated movement of the two tRNA molecules, the mRNA and conformational changes in the ribosome. The polypeptide is Elongation factor G (Ectopseudomonas mendocina (strain ymp) (Pseudomonas mendocina)).